Here is a 72-residue protein sequence, read N- to C-terminus: ATP synthase subunit c (72 aa).

The next 2 membrane-spanning stretches (helical) occupy residues 5–25 (LLAA…IGIA) and 52–72 (GLSE…LFVV).

It belongs to the ATPase C chain family. As to quaternary structure, F-type ATPases have 2 components, F(1) - the catalytic core - and F(0) - the membrane proton channel. F(1) has five subunits: alpha(3), beta(3), gamma(1), delta(1), epsilon(1). F(0) has three main subunits: a(1), b(2) and c(10-14). The alpha and beta chains form an alternating ring which encloses part of the gamma chain. F(1) is attached to F(0) by a central stalk formed by the gamma and epsilon chains, while a peripheral stalk is formed by the delta and b chains.

The protein localises to the cell membrane. Its function is as follows. F(1)F(0) ATP synthase produces ATP from ADP in the presence of a proton or sodium gradient. F-type ATPases consist of two structural domains, F(1) containing the extramembraneous catalytic core and F(0) containing the membrane proton channel, linked together by a central stalk and a peripheral stalk. During catalysis, ATP synthesis in the catalytic domain of F(1) is coupled via a rotary mechanism of the central stalk subunits to proton translocation. Functionally, key component of the F(0) channel; it plays a direct role in translocation across the membrane. A homomeric c-ring of between 10-14 subunits forms the central stalk rotor element with the F(1) delta and epsilon subunits. The sequence is that of ATP synthase subunit c from Clostridium perfringens (strain SM101 / Type A).